Consider the following 416-residue polypeptide: Enterobactin exporter EntS (416 aa).

Topologically, residues 1-21 are cytoplasmic; the sequence is MNRQSWLLNLSLLKTHPAFRA. The chain crosses the membrane as a helical span at residues 22–42; it reads VFLARFISIVSLGLLGVAVPV. Residues 43 to 55 lie on the Periplasmic side of the membrane; sequence QIQMMTHSTWQVG. A helical membrane pass occupies residues 56–76; the sequence is LSVTLTGSAMFVGLMVGGVLA. Residues 77 to 83 lie on the Cytoplasmic side of the membrane; it reads DRYERKK. A helical transmembrane segment spans residues 84-104; that stretch reads VILLARGTCGIGFIGLCLNAL. Topologically, residues 105-109 are periplasmic; that stretch reads LPEPS. Residues 110-130 traverse the membrane as a helical segment; it reads LLAIYLLGLWDGFFASLGVTA. Residues 131 to 156 are Cytoplasmic-facing; it reads LLAATPALVGRENLMQAGAITMLTVR. The chain crosses the membrane as a helical span at residues 157 to 177; sequence LGSVISPMLGGVLLATGGVAW. Position 178 (Asn-178) is a topological domain, periplasmic. The helical transmembrane segment at 179–199 threads the bilayer; it reads YGLAAAGTFITLLPLLSLPAL. The Cytoplasmic segment spans residues 200 to 218; that stretch reads PPPPQPREHPLKSLLAAFR. The chain crosses the membrane as a helical span at residues 219 to 239; sequence FLLSSPLIGGIALLGGLLTMA. Topologically, residues 240 to 256 are periplasmic; that stretch reads SAVRVLYPALAINWHMS. A helical membrane pass occupies residues 257–277; it reads AAQIGLLYAAIPLGAAVGALT. Topologically, residues 278–287 are cytoplasmic; that stretch reads SGQLAHSVRP. Residues 288–307 traverse the membrane as a helical segment; the sequence is GLLMLVSTVGSFLAIGVFGL. Residues 308-313 lie on the Periplasmic side of the membrane; it reads MPVWLL. A helical membrane pass occupies residues 314-336; the sequence is GVICLALFGWLSAISSLLQYTLL. The Cytoplasmic segment spans residues 337 to 356; it reads QTQTPEAMLGRINGLWTAQN. Residues 357–377 form a helical membrane-spanning segment; the sequence is VTGDAIGAALLGGLGAMMTPV. A topological domain (periplasmic) is located at residue Ala-378. Residues 379–399 form a helical membrane-spanning segment; it reads SASVSGFGLVIVGLLLMLLLG. Residues 400–416 are Cytoplasmic-facing; sequence ELRRFRQPPPVPDGAPL.

This sequence belongs to the major facilitator superfamily. EntS (TC 2.A.1.38) family.

Its subcellular location is the cell inner membrane. Functionally, component of an export pathway for enterobactin. This Citrobacter koseri (strain ATCC BAA-895 / CDC 4225-83 / SGSC4696) protein is Enterobactin exporter EntS.